A 161-amino-acid chain; its full sequence is 2-C-methyl-D-erythritol 2,4-cyclodiphosphate synthase (161 aa).

The a divalent metal cation site is built by Asp-13 and His-15. 4-CDP-2-C-methyl-D-erythritol 2-phosphate is bound by residues 13–15 (DAH) and 40–41 (HS). A divalent metal cation is bound at residue His-48. Residue 62-64 (DIG) participates in 4-CDP-2-C-methyl-D-erythritol 2-phosphate binding.

Belongs to the IspF family. Homotrimer. The cofactor is a divalent metal cation.

The catalysed reaction is 4-CDP-2-C-methyl-D-erythritol 2-phosphate = 2-C-methyl-D-erythritol 2,4-cyclic diphosphate + CMP. It participates in isoprenoid biosynthesis; isopentenyl diphosphate biosynthesis via DXP pathway; isopentenyl diphosphate from 1-deoxy-D-xylulose 5-phosphate: step 4/6. Involved in the biosynthesis of isopentenyl diphosphate (IPP) and dimethylallyl diphosphate (DMAPP), two major building blocks of isoprenoid compounds. Catalyzes the conversion of 4-diphosphocytidyl-2-C-methyl-D-erythritol 2-phosphate (CDP-ME2P) to 2-C-methyl-D-erythritol 2,4-cyclodiphosphate (ME-CPP) with a corresponding release of cytidine 5-monophosphate (CMP). In Deinococcus radiodurans (strain ATCC 13939 / DSM 20539 / JCM 16871 / CCUG 27074 / LMG 4051 / NBRC 15346 / NCIMB 9279 / VKM B-1422 / R1), this protein is 2-C-methyl-D-erythritol 2,4-cyclodiphosphate synthase.